Reading from the N-terminus, the 397-residue chain is Small ribosomal subunit protein mS29 (397 aa).

A mitochondrion-targeting transit peptide spans 1 to 17 (MLKGMTRLVSRVHKLDP). An N6-acetyllysine mark is found at Lys174 and Lys206.

This sequence belongs to the mitochondrion-specific ribosomal protein mS29 family. In terms of assembly, component of the mitochondrial ribosome small subunit (28S) which comprises a 12S rRNA and about 30 distinct proteins. Interacts with DELE1. Interacts with NOA1.

Its subcellular location is the mitochondrion. It carries out the reaction GTP + H2O = GDP + phosphate + H(+). As a component of the mitochondrial small ribosomal subunit, it plays a role in the translation of mitochondrial mRNAs. Involved in mediating interferon-gamma-induced cell death. Displays GTPase activity in vitro. The sequence is that of Small ribosomal subunit protein mS29 from Bos taurus (Bovine).